Consider the following 119-residue polypeptide: ATP-dependent Clp protease adapter protein ClpS (119 aa).

The interval 1 to 33 (MATRIPKTPSTPPAQKPAGDDGDSVVLERRPQK) is disordered.

The protein belongs to the ClpS family. As to quaternary structure, binds to the N-terminal domain of the chaperone ClpA.

Its function is as follows. Involved in the modulation of the specificity of the ClpAP-mediated ATP-dependent protein degradation. This chain is ATP-dependent Clp protease adapter protein ClpS, found in Variovorax paradoxus (strain S110).